The sequence spans 193 residues: Adenine phosphoribosyltransferase (193 aa).

The protein belongs to the purine/pyrimidine phosphoribosyltransferase family. As to quaternary structure, homodimer.

The protein localises to the cytoplasm. The enzyme catalyses AMP + diphosphate = 5-phospho-alpha-D-ribose 1-diphosphate + adenine. The protein operates within purine metabolism; AMP biosynthesis via salvage pathway; AMP from adenine: step 1/1. Its function is as follows. Catalyzes a salvage reaction resulting in the formation of AMP, that is energically less costly than de novo synthesis. This chain is Adenine phosphoribosyltransferase, found in Bifidobacterium longum (strain NCC 2705).